The primary structure comprises 1186 residues: Pumilio homolog 1 (1186 aa).

Position 2 is an N-acetylserine (Ser2). At Ser19 the chain carries Phosphoserine. The interval 22–73 is disordered; sequence LKHHPQEPANPNMPVVLTSGTGSQAQPQPAANQALAAGTHSSPVPGSIGVAG. Residues 45-58 show a composition bias toward low complexity; it reads QAQPQPAANQALAA. 3 positions are modified to phosphoserine: Ser75, Ser98, and Ser106. Phosphothreonine is present on Thr112. Residues Ser124, Ser159, Ser197, Ser209, and Ser229 each carry the phosphoserine modification. The disordered stretch occupies residues 233–272; it reads SCLRKGGFGPRDADSDENDKGEKKNKGTFDGDKLGDLKEE. Basic and acidic residues predominate over residues 250-272; sequence NDKGEKKNKGTFDGDKLGDLKEE. The residue at position 305 (Ser305) is a Phosphoserine. Residues 485–502 show a composition bias toward low complexity; that stretch reads TNSANQQTTPQAQQGQQQ. 2 disordered regions span residues 485-524 and 613-648; these read TNSA…GQQT and AGTT…FYGN. Over residues 511-524 the composition is skewed to polar residues; the sequence is RPLTPNQNQQGQQT. A Phosphothreonine modification is found at Thr514. A compositionally biased stretch (low complexity) spans 626–639; sequence QQPQPQPQQQPNNN. Phosphoserine occurs at positions 709 and 714. Residues 742–775 form a disordered region; sequence GPVGMPLPSQGPGHSQTPPPSLSSHGSSSSLNLG. Low complexity predominate over residues 763–775; it reads LSSHGSSSSLNLG. Arg796 bears the Omega-N-methylarginine mark. Ser806 and Ser822 each carry phosphoserine. The PUM-HD domain occupies 828–1168; the sequence is GRSRLLEDFR…HILAKLEKYY (341 aa). 8 Pumilio repeats span residues 848–883, 884–919, 920–955, 956–991, 992–1027, 1028–1063, 1064–1099, and 1103–1142; these read EIAG…LVFN, EILQ…ALAE, RIRG…EMVR, ELDG…FIID, AFKG…PILE, ELHQ…KIVA, EIRG…VLID, and TMND…IVMH. An adenine-nucleotide binding in RNA target region spans residues 863-867; the sequence is SRFIQ. Residues 899 to 903 are uracil-nucleotide binding in RNA target; that stretch reads NYVIQ. The segment at 935–939 is adenine-nucleotide binding in RNA target; the sequence is CRVIQ. Residues 971–975 form a non-specific-nucleotide binding in RNA target region; sequence NHVVQ. Residues 1007–1011 are adenine-nucleotide binding in RNA target; that stretch reads CRVIQ. The tract at residues 1043 to 1047 is uracil-nucleotide binding in RNA target; the sequence is NYVIQ. Guanine-nucleotide binding in RNA target regions lie at residues 1079-1083 and 1080-1083; these read SNVVE and NVVE. Residues 1122–1126 form a uracil-nucleotide binding in RNA target region; that stretch reads NYVVQ.

Recruits the CCR4-POP2-NOT deadenylase leading to translational inhibition and mRNA degradation. Interacts with TRIM71 (via NHL repeats) in an RNA-dependent manner. Post-translationally, phosphorylation at Ser-714 promotes RNA-binding activity. Following growth factor stimulation phosphorylated at Ser-714, promoting binding to the 3'-UTR of CDKN1B/p27 mRNA.

The protein localises to the cytoplasm. The protein resides in the P-body. Its subcellular location is the cytoplasmic granule. Functionally, sequence-specific RNA-binding protein that acts as a post-transcriptional repressor by binding the 3'-UTR of mRNA targets. Binds to an RNA consensus sequence, the Pumilio Response Element (PRE), 5'-UGUANAUA-3', that is related to the Nanos Response Element (NRE). Mediates post-transcriptional repression of transcripts via different mechanisms: acts via direct recruitment of the CCR4-POP2-NOT deadenylase leading to translational inhibition and mRNA degradation. Also mediates deadenylation-independent repression by promoting accessibility of miRNAs. Following growth factor stimulation, phosphorylated and binds to the 3'-UTR of CDKN1B/p27 mRNA, inducing a local conformational change that exposes miRNA-binding sites, promoting association of miR-221 and miR-222, efficient suppression of CDKN1B/p27 expression, and rapid entry to the cell cycle. Acts as a post-transcriptional repressor of E2F3 mRNAs by binding to its 3'-UTR and facilitating miRNA regulation. Represses a program of genes necessary to maintain genomic stability such as key mitotic, DNA repair and DNA replication factors. Its ability to repress those target mRNAs is regulated by the lncRNA NORAD (non-coding RNA activated by DNA damage) which, due to its high abundance and multitude of PUMILIO binding sites, is able to sequester a significant fraction of PUM1 and PUM2 in the cytoplasm. Involved in neuronal functions by regulating ATXN1 mRNA levels: acts by binding to the 3'-UTR of ATXN1 transcripts, leading to their down-regulation independently of the miRNA machinery. Plays a role in cytoplasmic sensing of viral infection. In testis, acts as a post-transcriptional regulator of spermatogenesis by binding to the 3'-UTR of mRNAs coding for regulators of p53/TP53. Involved in embryonic stem cell renewal by facilitating the exit from the ground state: acts by targeting mRNAs coding for naive pluripotency transcription factors and accelerates their down-regulation at the onset of differentiation. Binds specifically to miRNA MIR199A precursor, with PUM2, regulates miRNA MIR199A expression at a postranscriptional level. This is Pumilio homolog 1 (PUM1) from Pongo abelii (Sumatran orangutan).